The following is a 320-amino-acid chain: MLDIDTILAIIISFLIVLIVMPIVIPFLKYLKFGQVVRDDGPKTHHKKSGTPTMGGLVIGLAIIVTSLIFYKKYPAIGAPLIATVAFGLIGFIDDFIKVVLKRSLGLRAREKLVLQFLISITFLYVIQKHLGSDVYLPVINRYIDLKWAYVPVMSVLMVFTVNAVNLTDGLDGLASGVTMIVSLFLAIISIFSKNHDMAIFSGAIVGSCMGFLRYNAHPAVVFMGDTGSLMLGGSIFAIAVMLKQPVLVLVIGGLYIIEAVSVMLQVLYFKLTKKRIFRMAPLHHHFELLGWDEAKVVVVFWIFTILFCLLALAMIQLKI.

Transmembrane regions (helical) follow at residues 7–27, 50–70, 77–97, 113–133, 148–168, 173–193, 198–216, 221–241, 247–267, and 297–317; these read ILAI…VIPF, GTPT…SLIF, IGAP…DDFI, LVLQ…HLGS, WAYV…VNLT, GLAS…SIFS, MAIF…LRYN, VVFM…AIAV, VLVL…MLQV, and VVVV…AMIQ.

This sequence belongs to the glycosyltransferase 4 family. MraY subfamily. The cofactor is Mg(2+).

It is found in the cell membrane. The catalysed reaction is UDP-N-acetyl-alpha-D-muramoyl-L-alanyl-gamma-D-glutamyl-meso-2,6-diaminopimeloyl-D-alanyl-D-alanine + di-trans,octa-cis-undecaprenyl phosphate = di-trans,octa-cis-undecaprenyl diphospho-N-acetyl-alpha-D-muramoyl-L-alanyl-D-glutamyl-meso-2,6-diaminopimeloyl-D-alanyl-D-alanine + UMP. The protein operates within cell wall biogenesis; peptidoglycan biosynthesis. Catalyzes the initial step of the lipid cycle reactions in the biosynthesis of the cell wall peptidoglycan: transfers peptidoglycan precursor phospho-MurNAc-pentapeptide from UDP-MurNAc-pentapeptide onto the lipid carrier undecaprenyl phosphate, yielding undecaprenyl-pyrophosphoryl-MurNAc-pentapeptide, known as lipid I. This is Phospho-N-acetylmuramoyl-pentapeptide-transferase from Caldicellulosiruptor bescii (strain ATCC BAA-1888 / DSM 6725 / KCTC 15123 / Z-1320) (Anaerocellum thermophilum).